A 71-amino-acid chain; its full sequence is MNDLKLLRSKLSTETIEELYKKLNLLKKELFNLRFQQALGELKNTSRFSLVKKSIARIKTELTKRSNSEEY.

It belongs to the universal ribosomal protein uL29 family.

The protein is Large ribosomal subunit protein uL29 of Rickettsia canadensis (strain McKiel).